The chain runs to 329 residues: Beta-ketoacyl-[acyl-carrier-protein] synthase III (329 aa).

Residues Cys123 and His256 contribute to the active site. The segment at 257–261 is ACP-binding; it reads QANIR. Residue Asn286 is part of the active site.

It belongs to the thiolase-like superfamily. FabH family. In terms of assembly, homodimer.

It localises to the cytoplasm. The enzyme catalyses malonyl-[ACP] + acetyl-CoA + H(+) = 3-oxobutanoyl-[ACP] + CO2 + CoA. Its pathway is lipid metabolism; fatty acid biosynthesis. Functionally, catalyzes the condensation reaction of fatty acid synthesis by the addition to an acyl acceptor of two carbons from malonyl-ACP. Catalyzes the first condensation reaction which initiates fatty acid synthesis and may therefore play a role in governing the total rate of fatty acid production. Possesses both acetoacetyl-ACP synthase and acetyl transacylase activities. Its substrate specificity determines the biosynthesis of branched-chain and/or straight-chain of fatty acids. The polypeptide is Beta-ketoacyl-[acyl-carrier-protein] synthase III (Burkholderia pseudomallei (strain 1710b)).